The sequence spans 202 residues: Small ribosomal subunit protein uS4 (202 aa).

Residues 22-43 (TRKNARRAYPPGQHGQNRRKRS) form a disordered region. The 63-residue stretch at 90–152 (MRLDNTVFRL…DKSRKLVQAN (63 aa)) folds into the S4 RNA-binding domain.

The protein belongs to the universal ribosomal protein uS4 family. In terms of assembly, part of the 30S ribosomal subunit. Contacts protein S5. The interaction surface between S4 and S5 is involved in control of translational fidelity.

One of the primary rRNA binding proteins, it binds directly to 16S rRNA where it nucleates assembly of the body of the 30S subunit. Functionally, with S5 and S12 plays an important role in translational accuracy. In Gloeothece citriformis (strain PCC 7424) (Cyanothece sp. (strain PCC 7424)), this protein is Small ribosomal subunit protein uS4.